We begin with the raw amino-acid sequence, 286 residues long: Pantothenate synthetase (286 aa).

31 to 38 provides a ligand contact to ATP; the sequence is MGALHDGH. H38 acts as the Proton donor in catalysis. Q62 is a binding site for (R)-pantoate. Q62 serves as a coordination point for beta-alanine. Residue 148-151 participates in ATP binding; the sequence is GKKD. Q154 contacts (R)-pantoate. ATP is bound by residues V177 and 185-188; that span reads KSSR.

It belongs to the pantothenate synthetase family. As to quaternary structure, homodimer.

It localises to the cytoplasm. It catalyses the reaction (R)-pantoate + beta-alanine + ATP = (R)-pantothenate + AMP + diphosphate + H(+). It functions in the pathway cofactor biosynthesis; (R)-pantothenate biosynthesis; (R)-pantothenate from (R)-pantoate and beta-alanine: step 1/1. Its function is as follows. Catalyzes the condensation of pantoate with beta-alanine in an ATP-dependent reaction via a pantoyl-adenylate intermediate. This Staphylococcus epidermidis (strain ATCC 35984 / DSM 28319 / BCRC 17069 / CCUG 31568 / BM 3577 / RP62A) protein is Pantothenate synthetase.